A 36-amino-acid polypeptide reads, in one-letter code: Egg-laying-like hormone (36 aa).

The residue at position 36 (lysine 36) is a Lysine amide.

In terms of tissue distribution, supra, subesophageal ganglia and segmental ganglia of the ventral nerve cord and brain.

Its function is as follows. May be involved in leech reproduction. The protein is Egg-laying-like hormone of Theromyzon tessulatum (Duck leech).